Here is a 327-residue protein sequence, read N- to C-terminus: Complex I intermediate-associated protein 30, mitochondrial (327 aa).

The transit peptide at 1–24 (MALVHKLLRGTYFLRKFSKPTSAL) directs the protein to the mitochondrion. The interval 42–63 (PVASPGKASSQRKTEGDLQGDH) is disordered. Basic and acidic residues predominate over residues 53 to 63 (RKTEGDLQGDH). Ser318 bears the Phosphoserine mark.

This sequence belongs to the CIA30 family. As to quaternary structure, part of the mitochondrial complex I assembly/MCIA complex that comprises at least the core subunits TMEM126B, NDUFAF1, ECSIT and ACAD9 and complement subunits such as COA1 and TMEM186. Interacts with ECSIT. Interacts with ACAD9. At early stages of complex I assembly, it is found in intermediate subcomplexes that contain different subunits including NDUFB6, NDUFA6, NDUFA9, NDUFS3, NDUFS7, ND1, ND2 and ND3. Interacts with TMEM70 and TMEM242. Ubiquitous.

Its subcellular location is the mitochondrion. It is found in the mitochondrion matrix. Its function is as follows. As part of the MCIA complex, involved in the assembly of the mitochondrial complex I. This Homo sapiens (Human) protein is Complex I intermediate-associated protein 30, mitochondrial.